We begin with the raw amino-acid sequence, 619 residues long: Laccase (619 aa).

A signal peptide spans 1–21 (MKFLGIAALVAGLLAPSLVLG). The propeptide occupies 22–49 (APAPGTEGVNLLTPVDKRQDSQAERYGG). Cys-55 and Cys-63 form a disulfide bridge. Plastocyanin-like domains are found at residues 84–207 (TRRY…IVIN) and 216–373 (VDLG…LPTN). An N-linked (GlcNAc...) asparagine glycan is attached at Asn-139. Residues His-144, His-146, His-189, and His-191 each coordinate Cu cation. 2 disulfides stabilise this stretch: Cys-165–Cys-586 and Cys-349–Cys-383. Asn-282, Asn-295, and Asn-340 each carry an N-linked (GlcNAc...) asparagine glycan. N-linked (GlcNAc...) asparagine glycosylation is found at Asn-422 and Asn-444. The Plastocyanin-like 3 domain maps to 431–566 (NKPVLEYVLT…GGLSNQFLER (136 aa)). Residues His-477, His-480, His-482, His-548, Cys-549, His-550, and His-554 each coordinate Cu cation. Positions 607–619 (RSGVKAREVKMKW) are excised as a propeptide.

The protein belongs to the multicopper oxidase family. Requires Cu cation as cofactor.

It is found in the secreted. The catalysed reaction is 4 hydroquinone + O2 = 4 benzosemiquinone + 2 H2O. In terms of biological role, lignin degradation and detoxification of lignin-derived products. This Neurospora crassa (strain ATCC 24698 / 74-OR23-1A / CBS 708.71 / DSM 1257 / FGSC 987) protein is Laccase (lacc).